Reading from the N-terminus, the 604-residue chain is Sulfite reductase [NADPH] flavoprotein alpha-component (604 aa).

Residues 65–203 form the Flavodoxin-like domain; the sequence is VTILYGSQTG…AAGQWHADVL (139 aa). Residues 71 to 76, 118 to 121, and 154 to 163 contribute to the FMN site; these read SQTGNG, STHG, and LGDSSYEFFC. An FAD-binding FR-type domain is found at 236 to 453; it reads QNPYSAEVLV…VEPNKHFRLP (218 aa). FAD is bound by residues threonine 324, leucine 358, 392-395, 410-412, and 425-428; these read RLYS, TVA, and GGAS. NADP(+) contacts are provided by residues 524-525, 530-534, and aspartate 566; these read SR and KIYVQ. Residue tyrosine 604 coordinates FAD.

This sequence belongs to the NADPH-dependent sulphite reductase flavoprotein subunit CysJ family. It in the N-terminal section; belongs to the flavodoxin family. The protein in the C-terminal section; belongs to the flavoprotein pyridine nucleotide cytochrome reductase family. In terms of assembly, alpha(8)-beta(8). The alpha component is a flavoprotein, the beta component is a hemoprotein. Requires FAD as cofactor. FMN serves as cofactor.

It carries out the reaction hydrogen sulfide + 3 NADP(+) + 3 H2O = sulfite + 3 NADPH + 4 H(+). It functions in the pathway sulfur metabolism; hydrogen sulfide biosynthesis; hydrogen sulfide from sulfite (NADPH route): step 1/1. Component of the sulfite reductase complex that catalyzes the 6-electron reduction of sulfite to sulfide. This is one of several activities required for the biosynthesis of L-cysteine from sulfate. The flavoprotein component catalyzes the electron flow from NADPH -&gt; FAD -&gt; FMN to the hemoprotein component. This is Sulfite reductase [NADPH] flavoprotein alpha-component from Shewanella sp. (strain MR-7).